Reading from the N-terminus, the 220-residue chain is MKTGALATFLALCLPATVFATTLRLSNEVDLLVLDGKKVSSSLLRGAESIELENGPHQLVFRVEKTIRLPGNEERLYISPPLVISFDTQLISQVNFQLPRLENEREASHFNAAPRLALLDGDAMPIPVKLDILAITSTAKVVDYEIETERYNKSAKRASLPQFATMMADDSTLLSDVSELDTVPPQSQTLTEQRLKYWFRLADPQTRHHFLQWAEKQPPS.

A signal peptide spans 1–20; that stretch reads MKTGALATFLALCLPATVFA.

This sequence belongs to the UPF0319 family.

The chain is UPF0319 protein YccT from Salmonella heidelberg (strain SL476).